The primary structure comprises 276 residues: uncharacterized protein (276 aa).

The segment at 1-20 (MMSDEQHQGGDGQTTTNTNT) is disordered.

This is an uncharacterized protein from Dictyostelium discoideum (Social amoeba).